A 23-amino-acid polypeptide reads, in one-letter code: MTPPENKNLVQENKELIQEVLKA.

Positions M1–A23 are disordered. Positions E12–A23 are enriched in basic and acidic residues.

It belongs to the NifD/NifK/NifE/NifN family. Tetramer of two alpha and two beta chains. Forms complex with the iron protein (nitrogenase component 2). [8Fe-7S] cluster serves as cofactor. It depends on [7Fe-Mo-9S-C-homocitryl] cluster as a cofactor.

The catalysed reaction is N2 + 8 reduced [2Fe-2S]-[ferredoxin] + 16 ATP + 16 H2O = H2 + 8 oxidized [2Fe-2S]-[ferredoxin] + 2 NH4(+) + 16 ADP + 16 phosphate + 6 H(+). In terms of biological role, this molybdenum-iron protein is part of the nitrogenase complex that catalyzes the key enzymatic reactions in nitrogen fixation. The sequence is that of Nitrogenase molybdenum-iron protein alpha chain (nifD) from Anabaena sp. (strain L31).